Reading from the N-terminus, the 465-residue chain is VGFKAGVKDYKLTYYTPEYETKDTDILAAFRVTPQPGVPPEEAGAAVAAESSTGTWTTVWTDGLTSLDRYKGRCYHIEPVAGEENQFIAYVAYPLDLFEEGSVTNMFTSIVGNVFGFKAXRALRLEDLRIPSAYTKTFQGPPHGIQVERDKLNKYGRPLLGCTIKPKLGLSAKNYGRAVYECLRGGLDFTKDDENVNSQPFMRWRDRFLFCAEAIYKSQAETGEIKGHYLNATAGTCEEMIKRAVFARELAVPIVMHDYLTGGFTANTSLAHYCRDNGLLLHIHRAMHAVIDRQKNHGMHFRVLAKALRLSGGDHIHAGTVVGKLEGEREITLGFVDLLRDDFVEKDRSRGIYFTQDWVSLPGVLPVASGGIHVWHMPALTEIFGDDSVLQFGGGTLGHPWGNAPGAVANRVALEACVKARNEGRDLAREGNEIIREASKWSPELAAACEVWKEIKLEFEAMDTL.

Lys4 is modified (N6,N6,N6-trimethyllysine). Residues Asn113 and Thr163 each contribute to the substrate site. The active-site Proton acceptor is the Lys165. Lys167 is a binding site for substrate. 3 residues coordinate Mg(2+): Lys191, Asp193, and Glu194. Lys191 carries the N6-carboxylysine modification. His284 (proton acceptor) is an active-site residue. Residues Arg285, His317, and Ser369 each contribute to the substrate site.

It belongs to the RuBisCO large chain family. Type I subfamily. As to quaternary structure, heterohexadecamer of 8 large chains and 8 small chains; disulfide-linked. The disulfide link is formed within the large subunit homodimers. Mg(2+) serves as cofactor. The disulfide bond which can form in the large chain dimeric partners within the hexadecamer appears to be associated with oxidative stress and protein turnover.

It localises to the plastid. Its subcellular location is the chloroplast. The catalysed reaction is 2 (2R)-3-phosphoglycerate + 2 H(+) = D-ribulose 1,5-bisphosphate + CO2 + H2O. It catalyses the reaction D-ribulose 1,5-bisphosphate + O2 = 2-phosphoglycolate + (2R)-3-phosphoglycerate + 2 H(+). In terms of biological role, ruBisCO catalyzes two reactions: the carboxylation of D-ribulose 1,5-bisphosphate, the primary event in carbon dioxide fixation, as well as the oxidative fragmentation of the pentose substrate in the photorespiration process. Both reactions occur simultaneously and in competition at the same active site. This chain is Ribulose bisphosphate carboxylase large chain, found in Ulmus alata (Winged elm).